Here is a 617-residue protein sequence, read N- to C-terminus: Transmembrane protein 232 (617 aa).

Residues 129-149 (LVKIGYLIFLRLFVFFLHGHL) form a helical membrane-spanning segment. Positions 567–604 (LKQIEAVCEAQNRKDEEEKEKIRFQEIMKQRERKLNKQ) form a coiled coil. Residues 598 to 617 (ERKLNKQTKPYEITPSEKKE) form a disordered region.

The protein resides in the membrane. Its function is as follows. Plays a critical role for male fertility and sperm motility by regulating sperm cytoplasm removal and maintaining axoneme integrity. This is Transmembrane protein 232 (Tmem232) from Rattus norvegicus (Rat).